The chain runs to 343 residues: Ribosomal RNA small subunit methyltransferase C (343 aa).

This sequence belongs to the methyltransferase superfamily. RsmC family. As to quaternary structure, monomer.

It localises to the cytoplasm. The enzyme catalyses guanosine(1207) in 16S rRNA + S-adenosyl-L-methionine = N(2)-methylguanosine(1207) in 16S rRNA + S-adenosyl-L-homocysteine + H(+). Its function is as follows. Specifically methylates the guanine in position 1207 of 16S rRNA in the 30S particle. The polypeptide is Ribosomal RNA small subunit methyltransferase C (Escherichia coli (strain 55989 / EAEC)).